The following is a 506-amino-acid chain: Aldehyde dehydrogenase [NAD(P)+] 2 (506 aa).

The active-site Proton acceptor is the Glu268. Cys302 (nucleophile) is an active-site residue.

It belongs to the aldehyde dehydrogenase family.

The protein localises to the cytoplasm. The enzyme catalyses an aldehyde + NAD(+) + H2O = a carboxylate + NADH + 2 H(+). The catalysed reaction is 3-aminopropanal + NAD(+) + H2O = beta-alanine + NADH + 2 H(+). Its function is as follows. Cytoplasmic aldehyde dehydrogenase involved in ethanol oxidation. Involved in pantothenic acid production through the conversion of 3-aminopropanal to beta-alanine, an intermediate in pantothenic acid (vitamin B5) and coenzyme A (CoA) biosynthesis. This chain is Aldehyde dehydrogenase [NAD(P)+] 2 (ALD3), found in Saccharomyces cerevisiae (strain ATCC 204508 / S288c) (Baker's yeast).